We begin with the raw amino-acid sequence, 455 residues long: MHYSASGLALAFLLPAIQAQQTLYGQCGGSGWTGATSCVAGAACSTLNQWYAQCLPAATTTSTTLTTTTSSVTTTSNPGSTTTTSSVTVTATASGNPFSGYQLYVNPYYSSEVQSIAIPSLTGTLSSLAPAATAAAKVPSFVWLDVAAKVPTMATYLADIRSQNAAGANPPIAGQFVVYDLPDRDCAALASNGEFAISDGGVQHYKDYIDSIREILVEYSDVHVILVIEPDSLANLVTNLNVAKCANAQSAYLECTNYAVTQLNLPNVAMYLDAGHAGWLGWPANLQPAANLYAGVYSDAGSPAALRGLATNVANYNAWAIDTCPSYTQGNSVCDEKDYINALAPLLRAQGFDAHFITDTGRNGKQPTGQQAWGDWCNVIGTGFGARPSTNTGDSLLDAFVWVKPGGESDGTSDTSAARYDAHCGYSDALQPAPEAGTWFQAYFVQLLQNANPSF.

A signal peptide spans 1 to 19 (MHYSASGLALAFLLPAIQA). The 36-residue stretch at 20-55 (QQTLYGQCGGSGWTGATSCVAGAACSTLNQWYAQCL) folds into the CBM1 domain. Disulfide bonds link Cys27-Cys44 and Cys38-Cys54. Residues 59–92 (TTTSTTLTTTTSSVTTTSNPGSTTTTSSVTVTAT) form a thr-rich linker region. Residues 66–86 (TTTTSSVTTTSNPGSTTTTSS) form a disordered region. The interval 93–450 (ASGNPFSGYQ…QAYFVQLLQN (358 aa)) is catalytic. Residue Asp185 is part of the active site. Disulfide bonds link Cys186-Cys245 and Cys377-Cys424. Asp231 (proton donor) is an active-site residue. Residue Asp410 is the Nucleophile of the active site.

The protein belongs to the glycosyl hydrolase 6 (cellulase B) family.

Its subcellular location is the secreted. It carries out the reaction Hydrolysis of (1-&gt;4)-beta-D-glucosidic linkages in cellulose and cellotetraose, releasing cellobiose from the non-reducing ends of the chains.. Its function is as follows. The biological conversion of cellulose to glucose generally requires three types of hydrolytic enzymes: (1) Endoglucanases which cut internal beta-1,4-glucosidic bonds; (2) Exocellobiohydrolases that cut the disaccharide cellobiose from the non-reducing end of the cellulose polymer chain; (3) Beta-1,4-glucosidases which hydrolyze the cellobiose and other short cello-oligosaccharides to glucose. Active against carboxymethylcellulose, beta-glucan and lichenan. The chain is 1,4-beta-D-glucan cellobiohydrolase C (cbhC) from Emericella nidulans (strain FGSC A4 / ATCC 38163 / CBS 112.46 / NRRL 194 / M139) (Aspergillus nidulans).